The primary structure comprises 493 residues: UDP-glucose 6-dehydrogenase (493 aa).

NAD(+) is bound by residues 11–16 (GAGYVG), D36, R41, and 89–93 (VNTPT). Residues 88-110 (SVNTPTKTYGMGKGRAADLKYIE) form a disordered region. The residue at position 107 (K107) is an N6-acetyllysine. Residues 129–135 (KSTVPVR) are allosteric switch region. NAD(+) is bound at residue 130–132 (STV). E161 functions as the Proton donor/acceptor in the catalytic mechanism. Substrate-binding positions include 161–165 (EFLAE), 220–224 (KLAAN), R260, and 267–273 (KASVGFG). Position 165 (E165) interacts with NAD(+). The Proton donor/acceptor role is filled by K220. C276 acts as the Nucleophile in catalysis. 276-279 (CFQK) is an NAD(+) binding site. The tract at residues 321-325 (SLFNT) is important for formation of active hexamer structure. Substrate is bound at residue 338 to 339 (FK). R346 provides a ligand contact to NAD(+). R442 is a substrate binding site. Residues 466–493 (VSSKRIPYTPGEIPKFSLQDPPNKKPKV) form a disordered region. A Phosphothreonine modification is found at T474.

Belongs to the UDP-glucose/GDP-mannose dehydrogenase family. In terms of assembly, homohexamer.

It carries out the reaction UDP-alpha-D-glucose + 2 NAD(+) + H2O = UDP-alpha-D-glucuronate + 2 NADH + 3 H(+). Its pathway is nucleotide-sugar biosynthesis; UDP-alpha-D-glucuronate biosynthesis; UDP-alpha-D-glucuronate from UDP-alpha-D-glucose: step 1/1. UDP-alpha-D-xylose (UDX) acts as a feedback inhibitor. It binds at the same site as the substrate, but functions as allosteric inhibitor by triggering a conformation change that disrupts the active hexameric ring structure and gives rise to an inactive, horseshoe-shaped hexamer. Catalyzes the formation of UDP-alpha-D-glucuronate, a constituent of complex glycosaminoglycans. Required for the biosynthesis of chondroitin sulfate and heparan sulfate. Required for embryonic development via its role in the biosynthesis of glycosaminoglycans. Required for proper brain and neuronal development. The protein is UDP-glucose 6-dehydrogenase (Ugdh) of Mus musculus (Mouse).